Reading from the N-terminus, the 476-residue chain is Protein transport protein Sec61 subunit alpha-like 1 (476 aa).

Residues 2 to 33 (AIKFLEVIKPFCAVLPEIQKPERKIQFREKVL) are Cytoplasmic-facing. A helical transmembrane segment spans residues 34 to 53 (WTAITLFIFLVCCQIPLFGI). At 54-76 (MSSDSADPFYWMRVILASNRGTL) the chain is on the lumenal side. A helical membrane pass occupies residues 77–96 (MELGISPIVTSGLIMQLLAG). The Cytoplasmic segment spans residues 97-117 (AKIIEVGDTPKDRALFNGAQK). Residues 118–138 (LFGMIITIGQAIVYVMTGMYG) traverse the membrane as a helical segment. Over 139 to 144 (DPSEMG) the chain is Lumenal. Residues 145 to 165 (AGICLLIIIQLFVAGLIVLLL) form a helical membrane-spanning segment. Residues 166-172 (DELLQKG) lie on the Cytoplasmic side of the membrane. The chain crosses the membrane as a helical span at residues 173–193 (YGLGSGISLFIATNICETIVW). Residues 194–240 (KAFSPTTVNTGRGTEFEGAIIALFHLLATRTDKVRALREAFYRQNLP) are Lumenal-facing. The helical transmembrane segment at 241-261 (NLMNLIATVFVFAVVIYFQGF) threads the bilayer. Topologically, residues 262–288 (RVDLPIKSARYRGQYNTYPIKLFYTSN) are cytoplasmic. Residues 289-309 (IPIILQSALVSNLYVISQMLS) form a helical membrane-spanning segment. Residues 310 to 354 (TRFSGNFLVNLLGTWSDTSSGGPARAYPVGGLCYYLSPPESFGSV) are Lumenal-facing. A helical transmembrane segment spans residues 355–375 (LDDPVHAVIYIVFMLGSCAFF). Topologically, residues 376–420 (SKTWIEVSGSSAKDVAKQLKEQQMVMRGHRETSMVHELNRYIPTA) are cytoplasmic. A helical membrane pass occupies residues 421–441 (AAFGGLCIGGLSVMADFLGAI). The Lumenal segment spans residues 442–445 (GSGT). The helical transmembrane segment at 446-462 (GILLAVTIIYQYFEIFV) threads the bilayer. At 463–476 (KEQSEVGSMGALLF) the chain is on the cytoplasmic side.

Belongs to the SecY/SEC61-alpha family. In terms of assembly, the SEC61 channel-forming translocon complex consists of channel-forming core components SEC61A1, SEC61B and SEC61G and different auxiliary components such as SEC62 and SEC63. The SEC61 channel associates with the multi-pass translocon (MPT) complex.

The protein localises to the endoplasmic reticulum membrane. Functionally, component of SEC61 channel-forming translocon complex that mediates transport of signal peptide-containing precursor polypeptides across the endoplasmic reticulum (ER). Forms a ribosome receptor and a gated pore in the ER membrane, both functions required for cotranslational translocation of nascent polypeptides. May cooperate with auxiliary protein SEC62, SEC63 and HSPA5/BiP to enable post-translational transport of small presecretory proteins. The SEC61 channel is also involved in ER membrane insertion of transmembrane proteins: it mediates membrane insertion of the first few transmembrane segments of proteins, while insertion of subsequent transmembrane regions of multi-pass membrane proteins is mediated by the multi-pass translocon (MPT) complex. Plays a role in the pronephric kidney tubule development. The protein is Protein transport protein Sec61 subunit alpha-like 1 (sec61al1) of Danio rerio (Zebrafish).